Here is a 244-residue protein sequence, read N- to C-terminus: tRNA (guanine-N(7)-)-methyltransferase (244 aa).

Over residues 1 to 10 the composition is skewed to polar residues; the sequence is MSDTPQSPAQ. Residues 1-20 form a disordered region; that stretch reads MSDTPQSPAQDSLAEHDEAR. E74, E99, D126, and D149 together coordinate S-adenosyl-L-methionine. Residue D149 is part of the active site. Residues K153, D185, and 222–225 contribute to the substrate site; that span reads TKFE.

It belongs to the class I-like SAM-binding methyltransferase superfamily. TrmB family.

The enzyme catalyses guanosine(46) in tRNA + S-adenosyl-L-methionine = N(7)-methylguanosine(46) in tRNA + S-adenosyl-L-homocysteine. It participates in tRNA modification; N(7)-methylguanine-tRNA biosynthesis. Catalyzes the formation of N(7)-methylguanine at position 46 (m7G46) in tRNA. The chain is tRNA (guanine-N(7)-)-methyltransferase from Pseudomonas paraeruginosa (strain DSM 24068 / PA7) (Pseudomonas aeruginosa (strain PA7)).